The sequence spans 160 residues: Small ribosomal subunit protein uS7 (160 aa).

The protein belongs to the universal ribosomal protein uS7 family. Part of the 30S ribosomal subunit. Contacts proteins S9 and S11.

One of the primary rRNA binding proteins, it binds directly to 16S rRNA where it nucleates assembly of the head domain of the 30S subunit. Is located at the subunit interface close to the decoding center, probably blocks exit of the E-site tRNA. The polypeptide is Small ribosomal subunit protein uS7 (Anaplasma phagocytophilum (strain HZ)).